The primary structure comprises 78 residues: Small nuclear ribonucleoprotein F (78 aa).

The Sm domain occupies 7 to 78 (NPKPFLQGLI…NVLWVGESTV (72 aa)).

The protein belongs to the snRNP Sm proteins family. SmF/LSm6 subfamily. As to quaternary structure, belongs to the 40S cdc5-associated complex (or cwf complex), a spliceosome sub-complex reminiscent of a late-stage spliceosome composed of the U2, U5 and U6 snRNAs and at least brr2, cdc5, cwf2/prp3, cwf3/syf1, cwf4/syf3, cwf5/ecm2, spp42/cwf6, cwf7/spf27, cwf8, cwf9, cwf10, cwf11, cwf12, prp45/cwf13, cwf14, cwf15, cwf16, cwf17, cwf18, cwf19, cwf20, cwf21, cwf22, cwf23, cwf24, cwf25, cwf26, cyp7/cwf27, cwf28, cwf29/ist3, lea1, msl1, prp5/cwf1, prp10, prp12/sap130, prp17, prp22, sap61, sap62, sap114, sap145, slu7, smb1, smd1, smd3, smf1, smg1 and syf2.

The protein localises to the nucleus. It is found in the cytoplasm. Functionally, plays a role in pre-mRNA splicing as a core component of the spliceosomal U1, U2, U4 and U5 small nuclear ribonucleoproteins (snRNPs), the building blocks of the spliceosome. The polypeptide is Small nuclear ribonucleoprotein F (smf1) (Schizosaccharomyces pombe (strain 972 / ATCC 24843) (Fission yeast)).